We begin with the raw amino-acid sequence, 119 residues long: Ribonuclease P protein component (119 aa).

Belongs to the RnpA family. Consists of a catalytic RNA component (M1 or rnpB) and a protein subunit.

The enzyme catalyses Endonucleolytic cleavage of RNA, removing 5'-extranucleotides from tRNA precursor.. In terms of biological role, RNaseP catalyzes the removal of the 5'-leader sequence from pre-tRNA to produce the mature 5'-terminus. It can also cleave other RNA substrates such as 4.5S RNA. The protein component plays an auxiliary but essential role in vivo by binding to the 5'-leader sequence and broadening the substrate specificity of the ribozyme. This Bacillus cereus (strain ZK / E33L) protein is Ribonuclease P protein component.